Reading from the N-terminus, the 92-residue chain is UPF0298 protein ABC2380 (92 aa).

It belongs to the UPF0298 family.

The protein localises to the cytoplasm. This is UPF0298 protein ABC2380 from Shouchella clausii (strain KSM-K16) (Alkalihalobacillus clausii).